The following is a 381-amino-acid chain: Creatine kinase B-type (381 aa).

Phosphoserine is present on S4. Positions 11 to 98 constitute a Phosphagen kinase N-terminal domain; it reads KLRFPAEDEF…FDPIIEDRHG (88 aa). Position 35 is a phosphothreonine (T35). A Glycyl lysine isopeptide (Lys-Gly) (interchain with G-Cter in ubiquitin) cross-link involves residue K45. A creatine-binding site is contributed by V72. Over residues 96 to 110 the composition is skewed to basic and acidic residues; that stretch reads RHGGYKPSDEHKTDL. The segment at 96 to 123 is disordered; the sequence is RHGGYKPSDEHKTDLNPDNLQGGDDLDP. Glycyl lysine isopeptide (Lys-Gly) (interchain with G-Cter in ubiquitin) cross-links involve residues K101 and K107. At Y125 the chain carries Phosphotyrosine. The Phosphagen kinase C-terminal domain occupies 125-367; sequence YVLSSRVRTG…KLLIEMEQRL (243 aa). ATP contacts are provided by residues 128–132, R130, R132, and H191; that span reads SSRVR. Positions 130-138 are internal MTS-like signal; that stretch reads RVRTGRSIR. At S199 the chain carries Phosphoserine. E232 contacts creatine. R236 provides a ligand contact to ATP. 3'-nitrotyrosine is present on Y269. A creatine-binding site is contributed by S285. Residues R292, 292–296, R320, 320–325, and D335 contribute to the ATP site; these read RAGVH and RGTGGV. A Phosphothreonine modification is found at T322. K381 participates in a covalent cross-link: Glycyl lysine isopeptide (Lys-Gly) (interchain with G-Cter in ubiquitin).

This sequence belongs to the ATP:guanido phosphotransferase family. As to quaternary structure, dimer of identical or non-identical chains, which can be either B (brain type) or M (muscle type). With MM being the major form in skeletal muscle and myocardium, MB existing in myocardium, and BB existing in many tissues, especially brain. Interacts with SLC12A6 (via C-terminus); the interaction may be required for SLC12A6 potassium-chloride cotransport activity. In terms of processing, ubiquitinated by the ECS(ASB9) complex, leading to its degradation by the proteasome.

The protein resides in the cytoplasm. The protein localises to the cytosol. It localises to the mitochondrion. Its subcellular location is the cell membrane. The catalysed reaction is creatine + ATP = N-phosphocreatine + ADP + H(+). In terms of biological role, reversibly catalyzes the transfer of phosphate between ATP and various phosphogens (e.g. creatine phosphate). Creatine kinase isoenzymes play a central role in energy transduction in tissues with large, fluctuating energy demands, such as skeletal muscle, heart, brain and spermatozoa. Acts as a key regulator of adaptive thermogenesis as part of the futile creatine cycle: localizes to the mitochondria of thermogenic fat cells and acts by mediating phosphorylation of creatine to initiate a futile cycle of creatine phosphorylation and dephosphorylation. During the futile creatine cycle, creatine and N-phosphocreatine are in a futile cycle, which dissipates the high energy charge of N-phosphocreatine as heat without performing any mechanical or chemical work. The chain is Creatine kinase B-type (CKB) from Sus scrofa (Pig).